A 285-amino-acid chain; its full sequence is Methyltransferase grgD (285 aa).

This sequence belongs to the methyltransferase superfamily. LaeA methyltransferase family.

The protein operates within secondary metabolite biosynthesis. Methyltransferase; part of the gene cluster that mediates the biosynthesis of gregatin A, a fungal polyketide featuring an alkylated furanone core. The PKS grgA synthesizes C11 and C4 polyketide chains in the presence and absence of the trans-enoyl reductase grgB, respectively. The polyketide transferase grgF is then responsible for the fusion of the two carbon chains to produce the furanone skeleton of gregatin A. Next, the cytochrome P450 monooxygenase grgG accepts performs the oxidative cyclization to furnish the gregatin scaffold and leads to the formation of desmethylgregatin A. Finally, the O-methyltransferase grgD methylates the carboxyl group of desmethylgregatin A to provide gregatin A. The polypeptide is Methyltransferase grgD (Penicillium sp).